The chain runs to 696 residues: MDDDAGDGAASGGTKRKVTAASSSAAAKGKAAGKGKAASKASALATAKESSLLKQKSPAEFFAENKNIAGFDNPGKSLYTTMRELVENALDSAESISELPDIEIIIEEITKSKFNTMIGLVDRQRIDEELYDDFESAKAREKRLAKEARFQETQAKNAALGKKVKEAPAARGKGRGEAAFFRVTCKDNGRGMPHDDIPNMLGRVLSGTKYGLRQTRGKFGLGAKMALIWSKMSTGLPIEIKSSMKGQNFISFCRLDIDIHKNVPHVHLHEKRENKDRWHGAELQVIIEGNWTTHRSKILHYMRQMAVITPYAQFLFRFLSDSPDKNLTIQFARRTDVMPPIPLQTKHHPSAVDLLLIKRLISETTKQNLLQFLQHEFVNISKSHAERLIGEMGPDFSAKTTVKSLTSQQLVRIHQLFRQAKFDDPSGNCLSPAGEYNLRLGIIKELHPDLVATHASSPQVFEGHPFIVEAGISIGGKDVKHGLNIFRYANRIPLLFEQGADVITRTALKRINWSSYKINQQQDKIGVFVSIVSTKIPFKGTGKEYIGDDITEIASAVQSALKQCCLQLKSKIVKKLQARERQDRKRNLNRYIPDVARAIMETLGEIADESPPKRPRYDKEDEELLEKVNSEEVTEMTFRDCLTQHVEQVDYEMALEYAMQSGVSEEPREALYLNSLEGSYKFIDFQSPVFVFRFIP.

The disordered stretch occupies residues 1–36 (MDDDAGDGAASGGTKRKVTAASSSAAAKGKAAGKGK). Positions 20-36 (AASSSAAAKGKAAGKGK) are enriched in low complexity. ATP is bound by residues asparagine 88, aspartate 187, 208 to 209 (TK), 217 to 224 (GKFGLGAK), and lysine 543.

This sequence belongs to the TOP6B family. As to quaternary structure, homodimer. Heterotetramer of two TOP6A and two TOP6B subunits. Interacts with SPO11-2 and TOP6A3. Highly expressed in flowers before pollination. Expressed in roots and shoots.

It is found in the nucleus. It catalyses the reaction ATP-dependent breakage, passage and rejoining of double-stranded DNA.. Component of the DNA topoisomerase VI involved in chromatin organization and progression of endoreduplication cycles. Relaxes both positive and negative superturns and exhibits a strong decatenase activity. The B subunit binds ATP. May be involved in cell proliferation and stress tolerance. In Oryza sativa subsp. indica (Rice), this protein is DNA topoisomerase 6 subunit B.